The primary structure comprises 298 residues: Probable 3-mercaptopyruvate sulfurtransferase (298 aa).

The Rhodanese 1 domain maps to N24–T141. The segment at G142–P175 is hinge. S164 bears the Phosphoserine mark. The Rhodanese 2 domain occupies D176–S292. R190 is a binding site for substrate. C252 serves as the catalytic Cysteine persulfide intermediate.

The protein resides in the mitochondrion. It catalyses the reaction 2-oxo-3-sulfanylpropanoate + [thioredoxin]-dithiol = [thioredoxin]-disulfide + hydrogen sulfide + pyruvate + H(+). Functionally, required for formation of the 2-thio group of the 5-methoxycarbonylmethyl-2-thiouridine modified base in some tRNAs. This Schizosaccharomyces pombe (strain 972 / ATCC 24843) (Fission yeast) protein is Probable 3-mercaptopyruvate sulfurtransferase (tum1).